A 333-amino-acid chain; its full sequence is 2-oxoglutarate-dependent dioxygenase 21, chloroplastic (333 aa).

The transit peptide at 1-43 (MPAVAGSLYMASQHKGVPPPLPPPPRPLPVINLGRLTMDSASR) directs the protein to the chloroplast. The Fe2OG dioxygenase domain occupies 180–281 (GVQFVALNNY…RISIASIHGL (102 aa)). H205, D207, and H262 together coordinate Fe cation. R272 provides a ligand contact to 2-oxoglutarate.

It belongs to the iron/ascorbate-dependent oxidoreductase family. Fe(2+) serves as cofactor. It depends on L-ascorbate as a cofactor. As to expression, expressed in roots.

The protein resides in the plastid. It localises to the chloroplast. It carries out the reaction melatonin + 2-oxoglutarate + O2 = 2-hydroxymelatonin + succinate + CO2. Involved in melatonin degradation. Catalyzes the hydroxylation of melatonin to produce 2-hydroxymelatonin. This chain is 2-oxoglutarate-dependent dioxygenase 21, chloroplastic, found in Oryza sativa subsp. japonica (Rice).